We begin with the raw amino-acid sequence, 1370 residues long: DNA-directed RNA polymerase subunit beta (1370 aa).

This sequence belongs to the RNA polymerase beta chain family. The RNAP catalytic core consists of 2 alpha, 1 beta, 1 beta' and 1 omega subunit. When a sigma factor is associated with the core the holoenzyme is formed, which can initiate transcription.

It carries out the reaction RNA(n) + a ribonucleoside 5'-triphosphate = RNA(n+1) + diphosphate. Its function is as follows. DNA-dependent RNA polymerase catalyzes the transcription of DNA into RNA using the four ribonucleoside triphosphates as substrates. This Bordetella petrii (strain ATCC BAA-461 / DSM 12804 / CCUG 43448) protein is DNA-directed RNA polymerase subunit beta.